The sequence spans 256 residues: Pro-opiomelanocortin (256 aa).

A signal peptide spans 1–26 (MPRSCYSRSGTLLLALLLQISMEVRG). A disulfide bridge connects residues C28 and C50. The O-linked (GalNAc...) threonine glycan is linked to T71. Phenylalanine amide is present on F87. Positions 88–120 (GRGNSSGASQKREEEAAAADPGFHGDGVEPGLR) are disordered. N-linked (GlcNAc...) asparagine glycosylation occurs at N91. The propeptide occupies 100–122 (EEEAAAADPGFHGDGVEPGLRED). S125 is modified (N-acetylserine; in Corticotropin). At V137 the chain carries Valine amide. S155 carries the phosphoserine modification.

This sequence belongs to the POMC family. In terms of processing, specific enzymatic cleavages at paired basic residues yield the different active peptides. In terms of tissue distribution, ACTH and MSH are produced by the pituitary gland.

The protein localises to the secreted. In terms of biological role, ACTH stimulates the adrenal glands to release cortisol. Functionally, MSH (melanocyte-stimulating hormone) increases the pigmentation of skin by increasing melanin production in melanocytes. Beta-endorphin and Met-enkephalin are endogenous opiates. Its function is as follows. Stimulates the adrenal glands to release cortisol. In terms of biological role, anorexigenic peptide. Increases the pigmentation of skin by increasing melanin production in melanocytes. Functionally, increases the pigmentation of skin by increasing melanin production in melanocytes. Endogenous orexigenic opiate. Its function is as follows. Endogenous opiate. The protein is Pro-opiomelanocortin (POMC) of Cavia porcellus (Guinea pig).